Here is a 317-residue protein sequence, read N- to C-terminus: Ornithine carbamoyltransferase (317 aa).

Residues 57-60 (STRT), glutamine 84, arginine 108, and 135-138 (HPCQ) contribute to the carbamoyl phosphate site. L-ornithine contacts are provided by residues asparagine 166, aspartate 230, and 234–235 (SM). Residues 270–271 (CL) and arginine 298 contribute to the carbamoyl phosphate site.

Belongs to the aspartate/ornithine carbamoyltransferase superfamily. OTCase family. Homododecamer.

Its subcellular location is the cytoplasm. It catalyses the reaction carbamoyl phosphate + L-ornithine = L-citrulline + phosphate + H(+). The protein operates within amino-acid biosynthesis; L-arginine biosynthesis; L-arginine from L-ornithine and carbamoyl phosphate: step 1/3. In terms of biological role, reversibly catalyzes the transfer of the carbamoyl group from carbamoyl phosphate (CP) to the N(epsilon) atom of ornithine (ORN) to produce L-citrulline. This Pyrococcus abyssi (strain GE5 / Orsay) protein is Ornithine carbamoyltransferase.